The chain runs to 654 residues: Transcription factor E2-alpha (654 aa).

Positions 19-27 (LLDFSMMFP) match the 9aaTAD motif. Positions 31–103 (TNGKGRPASL…LGPGLGGKSG (73 aa)) are disordered. A compositionally biased stretch (low complexity) spans 55-68 (SSGSWGSGDQSSSS). A compositionally biased stretch (polar residues) spans 69-79 (FDPSRTFSEGT). Residues 84–94 (SHSSLSSSTFL) show a composition bias toward low complexity. A phosphoserine mark is found at S134 and S139. 4 disordered regions span residues 135–205 (PGPL…SAKT), 239–268 (MLGGGSSPLPLPPGSGPVGSSGSSSTFGGL), 292–329 (SFSSAPGATYGGVSSHTPPVSGADSLLGSRGTTAGSSG), and 343–385 (DHSS…YDGG). The span at 147 to 156 (SQYYPSYSGS) shows a compositional bias: low complexity. The Nuclear localization signal signature appears at 170-176 (PKKVRKV). Residues 256 to 268 (VGSSGSSSTFGGL) are compositionally biased toward low complexity. Positions 343–354 (DHSSNNFSSSPS) are enriched in low complexity. Phosphothreonine is present on T355. S359 is modified (phosphoserine). R371 is subject to Omega-N-methylarginine. S379 is modified (phosphoserine). The tract at residues 389–425 (LQSKIEDHLDEAIHVLRSHAVGTAGDMHTLLPGHGAL) is leucine-zipper. The segment at 461 to 552 (NHAALPSQPG…KAEREKERRV (92 aa)) is disordered. K498 participates in a covalent cross-link: Glycyl lysine isopeptide (Lys-Gly) (interchain with G-Cter in SUMO2). A compositionally biased stretch (basic and acidic residues) spans 512–523 (DHSEEEKKELKA). A Phosphoserine modification is found at S529. D531 is modified (phosphothreonine). Residues 542-552 (QKAEREKERRV) are compositionally biased toward basic and acidic residues. Residues 549–602 (ERRVANNARERLRVRDINEAFKELGRMCQLHLNSEKPQTKLLILHQAVSVILNL) form the bHLH domain. Residue K625 forms a Glycyl lysine isopeptide (Lys-Gly) (interchain with G-Cter in SUMO2) linkage. Residues 633-654 (PQMVLSAPHPGLSEAHNPAGHM) form a disordered region.

As to quaternary structure, homodimer. Heterodimer; efficient DNA binding requires dimerization with another bHLH protein. Forms a heterodimer with ASH1, TWIST1 and TWIST2. Forms a heterodimer with MYOG; heterodimerization enhances MYOG DNA-binding and transcriptional activities. Forms a heterodimer with NEUROD1; the heterodimer is inhibited in presence of ID2, but not NR0B2, to E-box element. Forms a heterodimer with TCF15; the heterodimer binds E-box element. Forms a heterodimer with ATOH8; repress transcription of TCF3 and TCF3/NEUROG3 dimer-induced transactivation of E box-dependent promoters. Component of a nuclear TAL-1 complex composed at least of CBFA2T3, LDB1, TAL1 and TCF3. Interacts with NEUROD2, PTF1A and TGFB1I1. Interacts with EP300 and UBE2I. Interacts with BHLHA9. Interacts with ASB2; the interaction is mediated by SKP2 and targets TCF3 for Notch-induced proteasomal degradation. In terms of assembly, forms a heterodimer with ATOH7; required for ATOH7 DNA-binding. Interacts with RALGAPA1 and FIGLA. In terms of processing, phosphorylated following NGF stimulation. Undergoes Notch-induced ubiquitination and subsequent proteasomal degradation which is mediated by ASB1 or ASB2, the substrate-recognition components of probable ECS E3 ubiquitin-protein ligase complexes.

It localises to the nucleus. Transcriptional regulator involved in the initiation of neuronal differentiation and mesenchymal to epithelial transition. Heterodimers between TCF3 and tissue-specific basic helix-loop-helix (bHLH) proteins play major roles in determining tissue-specific cell fate during embryogenesis, like muscle or early B-cell differentiation. Together with TCF15, required for the mesenchymal to epithelial transition. Dimers bind DNA on E-box motifs: 5'-CANNTG-3'. Binds to the kappa-E2 site in the kappa immunoglobulin gene enhancer. Binds to IEB1 and IEB2, which are short DNA sequences in the insulin gene transcription control region. Functionally, facilitates ATOH7 binding to DNA at the consensus sequence 5'-CAGGTG-3', and positively regulates transcriptional activity. The chain is Transcription factor E2-alpha (TCF3) from Homo sapiens (Human).